Reading from the N-terminus, the 811-residue chain is DNA mismatch repair protein MutS (811 aa).

Gly-595–Ser-602 lines the ATP pocket.

Belongs to the DNA mismatch repair MutS family.

Functionally, this protein is involved in the repair of mismatches in DNA. It is possible that it carries out the mismatch recognition step. This protein has a weak ATPase activity. The polypeptide is DNA mismatch repair protein MutS (Pseudothermotoga lettingae (strain ATCC BAA-301 / DSM 14385 / NBRC 107922 / TMO) (Thermotoga lettingae)).